We begin with the raw amino-acid sequence, 636 residues long: 1-deoxy-D-xylulose-5-phosphate synthase (636 aa).

Thiamine diphosphate contacts are provided by residues His75 and 116–118; that span reads AHS. Residue Asp147 participates in Mg(2+) binding. Residues 148-149, Asn177, Tyr288, and Glu370 contribute to the thiamine diphosphate site; that span reads GA. Asn177 contacts Mg(2+).

This sequence belongs to the transketolase family. DXPS subfamily. Homodimer. Requires Mg(2+) as cofactor. Thiamine diphosphate is required as a cofactor.

The catalysed reaction is D-glyceraldehyde 3-phosphate + pyruvate + H(+) = 1-deoxy-D-xylulose 5-phosphate + CO2. It participates in metabolic intermediate biosynthesis; 1-deoxy-D-xylulose 5-phosphate biosynthesis; 1-deoxy-D-xylulose 5-phosphate from D-glyceraldehyde 3-phosphate and pyruvate: step 1/1. In terms of biological role, catalyzes the acyloin condensation reaction between C atoms 2 and 3 of pyruvate and glyceraldehyde 3-phosphate to yield 1-deoxy-D-xylulose-5-phosphate (DXP). The protein is 1-deoxy-D-xylulose-5-phosphate synthase of Ralstonia nicotianae (strain ATCC BAA-1114 / GMI1000) (Ralstonia solanacearum).